Here is a 428-residue protein sequence, read N- to C-terminus: Cyclic AMP-responsive element-binding protein 3-like protein 3-B (428 aa).

Over 1 to 286 (MDHYSDQGGD…VMNGSNKPVQ (286 aa)) the chain is Cytoplasmic. The span at 67–83 (VSGSPVWSPSPSDSGIS) shows a compositional bias: low complexity. The interval 67–104 (VSGSPVWSPSPSDSGISEDPHSDHIDSPPPNASPPMEP) is disordered. Residues 93–103 (SPPPNASPPME) show a composition bias toward pro residues. Residues 210–273 (ILKKIRRKIR…ISLMEQLRRL (64 aa)) enclose the bZIP domain. Positions 212-241 (KKIRRKIRNKQSAQESRKKKKEYIDGLESR) are basic motif. The tract at residues 252-273 (LQRKVFQLEKCNISLMEQLRRL) is leucine-zipper. A helical; Signal-anchor for type II membrane protein membrane pass occupies residues 287-303 (AGTCVLVLLLSFTLILL). At 304–428 (PNLKPFTDTK…SRRSPHADDM (125 aa)) the chain is on the lumenal side. Residues 381–428 (TEYDPESHNHSFDQHDEHHHGDPITGHVATVTLNPRRGSRRSPHADDM) form a disordered region. Over residues 385–402 (PESHNHSFDQHDEHHHGD) the composition is skewed to basic and acidic residues. Asn-389 carries an N-linked (GlcNAc...) asparagine glycan.

Belongs to the bZIP family. ATF subfamily. In terms of assembly, binds DNA as a dimer. Controlled by regulated intramembrane proteolysis (RIP). A fragment containing the cytoplasmic transcription factor domain is released by proteolysis. The cleavage seems to be performed sequentially by site-1 and site-2 proteases.

The protein localises to the endoplasmic reticulum membrane. It localises to the nucleus. In terms of biological role, transcriptional activator. Binds the cAMP response element (CRE). Activates transcription through box-B element and CRE. Seems to function synergistically with atf6. Regulates FGF21 transcription. The chain is Cyclic AMP-responsive element-binding protein 3-like protein 3-B (creb3l3b) from Danio rerio (Zebrafish).